Here is a 310-residue protein sequence, read N- to C-terminus: Cytochrome f (310 aa).

An N-terminal signal peptide occupies residues 1-27 (MRRHLSLFLGSLVIGLALLIAPAASWA). Residues Y28, C48, C51, and H52 each contribute to the heme site. A helical membrane pass occupies residues 277–297 (IYGLLAFFAAVALAQIMLVLK).

It belongs to the cytochrome f family. The 4 large subunits of the cytochrome b6-f complex are cytochrome b6, subunit IV (17 kDa polypeptide, PetD), cytochrome f and the Rieske protein, while the 4 small subunits are PetG, PetL, PetM and PetN. The complex functions as a dimer. Heme is required as a cofactor.

It localises to the cellular thylakoid membrane. Component of the cytochrome b6-f complex, which mediates electron transfer between photosystem II (PSII) and photosystem I (PSI), cyclic electron flow around PSI, and state transitions. The protein is Cytochrome f of Synechococcus sp. (strain CC9605).